Reading from the N-terminus, the 420-residue chain is Anaerobic glycerol-3-phosphate dehydrogenase subunit B (420 aa).

Belongs to the anaerobic G-3-P dehydrogenase subunit B family. Composed of a catalytic GlpA/B dimer and of membrane bound GlpC. FMN serves as cofactor.

It carries out the reaction a quinone + sn-glycerol 3-phosphate = dihydroxyacetone phosphate + a quinol. It functions in the pathway polyol metabolism; glycerol degradation via glycerol kinase pathway; glycerone phosphate from sn-glycerol 3-phosphate (anaerobic route): step 1/1. Its function is as follows. Conversion of glycerol 3-phosphate to dihydroxyacetone. Uses fumarate or nitrate as electron acceptor. The polypeptide is Anaerobic glycerol-3-phosphate dehydrogenase subunit B (Pectobacterium atrosepticum (strain SCRI 1043 / ATCC BAA-672) (Erwinia carotovora subsp. atroseptica)).